A 128-amino-acid polypeptide reads, in one-letter code: Sulfurtransferase TusD (128 aa).

Catalysis depends on cysteine 78, which acts as the Cysteine persulfide intermediate.

The protein belongs to the DsrE/TusD family. Heterohexamer, formed by a dimer of trimers. The hexameric TusBCD complex contains 2 copies each of TusB, TusC and TusD. The TusBCD complex interacts with TusE.

Its subcellular location is the cytoplasm. In terms of biological role, part of a sulfur-relay system required for 2-thiolation of 5-methylaminomethyl-2-thiouridine (mnm(5)s(2)U) at tRNA wobble positions. Accepts sulfur from TusA and transfers it in turn to TusE. The chain is Sulfurtransferase TusD from Enterobacter sp. (strain 638).